Here is a 93-residue protein sequence, read N- to C-terminus: MTMKIRAIVTVKGLVQGVAFRHHTVLQGNQLRVTGWVKNLPNGDVQGCFEGDETDVQALVEWCHHGPSRARVDRVIVERKSFRGEFDTFDVRY.

Positions 6–93 (RAIVTVKGLV…GEFDTFDVRY (88 aa)) constitute an Acylphosphatase-like domain. Residues R21 and N39 contribute to the active site.

Belongs to the acylphosphatase family.

It catalyses the reaction an acyl phosphate + H2O = a carboxylate + phosphate + H(+). In Geobacter metallireducens (strain ATCC 53774 / DSM 7210 / GS-15), this protein is Acylphosphatase (acyP).